An 860-amino-acid chain; its full sequence is DNA mismatch repair protein MutS (860 aa).

G607–S614 serves as a coordination point for ATP.

Belongs to the DNA mismatch repair MutS family.

This protein is involved in the repair of mismatches in DNA. It is possible that it carries out the mismatch recognition step. This protein has a weak ATPase activity. This Listeria innocua serovar 6a (strain ATCC BAA-680 / CLIP 11262) protein is DNA mismatch repair protein MutS.